A 235-amino-acid chain; its full sequence is Sugar fermentation stimulation protein homolog (235 aa).

The protein belongs to the SfsA family.

The chain is Sugar fermentation stimulation protein homolog from Photorhabdus laumondii subsp. laumondii (strain DSM 15139 / CIP 105565 / TT01) (Photorhabdus luminescens subsp. laumondii).